The sequence spans 1491 residues: Neurexin-1a (1491 aa).

The N-terminal stretch at 1-27 (MSFSMRNGAHLIWIGLLVCCLVDMGAS) is a signal peptide. Residues 28-208 (MEFTGAEGQW…SDICEADHIC (181 aa)) form the Laminin G-like 1 domain. At 28–1415 (MEFTGAEGQW…EVIRESSSTT (1388 aa)) the chain is on the extracellular side. The region spanning 198–236 (NSDICEADHICLNGGVCSIVNDEPICDCSETGFQGKDCS) is the EGF-like 1 domain. 3 disulfides stabilise this stretch: Cys202–Cys214, Cys208–Cys223, and Cys225–Cys235. Laminin G-like domains follow at residues 263–460 (MATF…AFKC) and 467–661 (DPVT…KPSC). Residues Asp309, Leu326, and Met394 each contribute to the Ca(2+) site. Disulfide bonds link Cys424/Cys460, Cys632/Cys661, Cys669/Cys680, Cys674/Cys689, and Cys691/Cys701. The 38-residue stretch at 665–702 (PPKQCLSNPCLNSGTCREGWNRYVCDCSGTGYLGRSCE) folds into the EGF-like 2 domain. 2 consecutive Laminin G-like domains span residues 707-880 (ILSY…IDYC) and 894-1069 (DPVT…ERGC). Disulfide bonds link Cys1041–Cys1069, Cys1076–Cys1087, Cys1081–Cys1096, and Cys1098–Cys1108. The region spanning 1072–1109 (PSTTCQEDSCSNQGVCLQQWEGFSCDCSMTSYGGPLCN) is the EGF-like 3 domain. One can recognise a Laminin G-like 6 domain in the interval 1113–1314 (TTYIFGRDGG…DPNVRVEGSA (202 aa)). Positions 1318–1408 (GDMPSSSITP…AKGYPSPEVI (91 aa)) are disordered. Over residues 1322 to 1353 (SSSITPQSSVSAAGNRSETSPSITDITTTTAS) the composition is skewed to low complexity. The segment covering 1354 to 1364 (NRQGKQTTTPQ) has biased composition (polar residues). A helical membrane pass occupies residues 1416–1436 (GMVVGIVAAAALCILILLYAM). Residues 1437–1491 (YKYRNRDEGSYHVDESRNYISNSATQPNGAAVKEKPIGVPKNKKDKKNKDKEYYV) are Cytoplasmic-facing. The segment at 1457-1491 (SNSATQPNGAAVKEKPIGVPKNKKDKKNKDKEYYV) is disordered.

Belongs to the neurexin family.

It localises to the membrane. Neuronal cell surface protein that may be involved in cell recognition and cell adhesion. The protein is Neurexin-1a (nrxn1a) of Danio rerio (Zebrafish).